A 674-amino-acid chain; its full sequence is tRNA 5-methylaminomethyl-2-thiouridine biosynthesis bifunctional protein MnmC (674 aa).

The tRNA (mnm(5)s(2)U34)-methyltransferase stretch occupies residues 1 to 246; sequence MFIMSSISHA…KREMIAGSLS (246 aa). The interval 272 to 674 is FAD-dependent cmnm(5)s(2)U34 oxidoreductase; sequence IGGGIASATL…RKGKALTQKV (403 aa).

In the N-terminal section; belongs to the methyltransferase superfamily. tRNA (mnm(5)s(2)U34)-methyltransferase family. This sequence in the C-terminal section; belongs to the DAO family. FAD is required as a cofactor.

The protein resides in the cytoplasm. The enzyme catalyses 5-aminomethyl-2-thiouridine(34) in tRNA + S-adenosyl-L-methionine = 5-methylaminomethyl-2-thiouridine(34) in tRNA + S-adenosyl-L-homocysteine + H(+). Catalyzes the last two steps in the biosynthesis of 5-methylaminomethyl-2-thiouridine (mnm(5)s(2)U) at the wobble position (U34) in tRNA. Catalyzes the FAD-dependent demodification of cmnm(5)s(2)U34 to nm(5)s(2)U34, followed by the transfer of a methyl group from S-adenosyl-L-methionine to nm(5)s(2)U34, to form mnm(5)s(2)U34. The sequence is that of tRNA 5-methylaminomethyl-2-thiouridine biosynthesis bifunctional protein MnmC from Vibrio cholerae serotype O1 (strain ATCC 39315 / El Tor Inaba N16961).